The primary structure comprises 431 residues: uncharacterized protein (431 aa).

The Peptidase S8 domain maps to 1-258 (MPSQMREAIT…HGLIDLERAG (258 aa)).

It belongs to the peptidase S8 family.

This is an uncharacterized protein from Sinorhizobium fredii (strain NBRC 101917 / NGR234).